The chain runs to 126 residues: Fluoride-specific ion channel FluC (126 aa).

Helical transmembrane passes span 7–27, 36–56, 74–94, and 98–118; these read LWLALGGAVGAVCRQAAVLLL, FPAAVLLINVLGSFLLGLTLA, GVLGAFTTFSTFSTELDGLLL, and GGLALAYAALSVGLGLTAAVA. The Na(+) site is built by Gly-77 and Thr-80.

The protein belongs to the fluoride channel Fluc/FEX (TC 1.A.43) family.

The protein localises to the cell membrane. It catalyses the reaction fluoride(in) = fluoride(out). Its activity is regulated as follows. Na(+) is not transported, but it plays an essential structural role and its presence is essential for fluoride channel function. In terms of biological role, fluoride-specific ion channel. Important for reducing fluoride concentration in the cell, thus reducing its toxicity. The protein is Fluoride-specific ion channel FluC of Deinococcus radiodurans (strain ATCC 13939 / DSM 20539 / JCM 16871 / CCUG 27074 / LMG 4051 / NBRC 15346 / NCIMB 9279 / VKM B-1422 / R1).